The sequence spans 305 residues: Catechol 1,2-dioxygenase (305 aa).

Fe cation contacts are provided by tyrosine 163, tyrosine 197, histidine 221, and histidine 223.

The protein belongs to the intradiol ring-cleavage dioxygenase family. As to quaternary structure, homodimer. The cofactor is Fe(3+).

The enzyme catalyses catechol + O2 = cis,cis-muconate + 2 H(+). It functions in the pathway aromatic compound metabolism; beta-ketoadipate pathway; 5-oxo-4,5-dihydro-2-furylacetate from catechol: step 1/3. The polypeptide is Catechol 1,2-dioxygenase (catA) (Acinetobacter guillouiae (Acinetobacter genomosp. 11)).